The following is a 361-amino-acid chain: Alanine racemase (361 aa).

The active-site Proton acceptor; specific for D-alanine is the Lys-34. The residue at position 34 (Lys-34) is an N6-(pyridoxal phosphate)lysine. Arg-129 is a substrate binding site. Catalysis depends on Tyr-256, which acts as the Proton acceptor; specific for L-alanine. Met-304 contacts substrate.

The protein belongs to the alanine racemase family. Homodimer. Pyridoxal 5'-phosphate is required as a cofactor.

It carries out the reaction L-alanine = D-alanine. Its pathway is amino-acid biosynthesis; D-alanine biosynthesis; D-alanine from L-alanine: step 1/1. Functionally, catalyzes the interconversion of L-alanine and D-alanine. May also act on other amino acids. The protein is Alanine racemase (alr) of Corynebacterium glutamicum (strain ATCC 13032 / DSM 20300 / JCM 1318 / BCRC 11384 / CCUG 27702 / LMG 3730 / NBRC 12168 / NCIMB 10025 / NRRL B-2784 / 534).